A 63-amino-acid chain; its full sequence is Large ribosomal subunit protein bL28 (63 aa).

It belongs to the bacterial ribosomal protein bL28 family.

The protein is Large ribosomal subunit protein bL28 of Alkaliphilus oremlandii (strain OhILAs) (Clostridium oremlandii (strain OhILAs)).